We begin with the raw amino-acid sequence, 338 residues long: 1-aminocyclopropane-1-carboxylate deaminase (338 aa).

Lysine 51 bears the N6-(pyridoxal phosphate)lysine mark. The Nucleophile role is filled by serine 78.

This sequence belongs to the ACC deaminase/D-cysteine desulfhydrase family. As to quaternary structure, homotrimer. It depends on pyridoxal 5'-phosphate as a cofactor.

It catalyses the reaction 1-aminocyclopropane-1-carboxylate + H2O = 2-oxobutanoate + NH4(+). Functionally, catalyzes a cyclopropane ring-opening reaction, the irreversible conversion of 1-aminocyclopropane-1-carboxylate (ACC) to ammonia and alpha-ketobutyrate. Allows growth on ACC as a nitrogen source. In Paraburkholderia xenovorans (strain LB400), this protein is 1-aminocyclopropane-1-carboxylate deaminase.